Here is a 286-residue protein sequence, read N- to C-terminus: L-ribulose 3-epimerase (286 aa).

The D-allulose site is built by His-12, Ser-69, Glu-152, and Glu-158. The D-fructose site is built by His-12, Ser-69, Glu-152, and Glu-158. Glu-152 functions as the Proton donor/acceptor in the catalytic mechanism. Glu-152 lines the Mn(2+) pocket. Residue Asp-185 coordinates Mn(2+). The D-allulose site is built by His-188, His-211, Arg-217, and Glu-246. D-fructose contacts are provided by His-188, His-211, Arg-217, and Glu-246. A Mn(2+)-binding site is contributed by His-211. The Proton donor/acceptor role is filled by Glu-246. Residue Glu-246 participates in Mn(2+) binding.

This sequence belongs to the hyi family. As to quaternary structure, homodimer. The cofactor is Mn(2+).

The enzyme catalyses L-ribulose = L-xylulose. It catalyses the reaction D-ribulose = D-xylulose. The catalysed reaction is D-allulose = keto-D-fructose. It carries out the reaction keto-L-tagatose = keto-L-sorbose. The enzyme catalyses keto-D-tagatose = keto-D-sorbose. In terms of biological role, catalyzes the epimerization of various ketoses at the C(3) position. Exhibits the highest enzymatic activity toward L-ribulose, followed by D-ribulose, D-allulose and D-fructose. Shows lower activity with L-xylulose, L-tagatose, D-xylulose, D-tagatose, L-sorbose, D-sorbose, and weak activity with L-allulose and L-fructose. The protein is L-ribulose 3-epimerase of Methylomonas sp. (strain DH-1).